The following is a 391-amino-acid chain: Flagellin (391 aa).

It belongs to the bacterial flagellin family.

The protein resides in the secreted. Its subcellular location is the bacterial flagellum. In terms of biological role, flagellin is the subunit protein which polymerizes to form the filaments of bacterial flagella. The sequence is that of Flagellin (flaA) from Bordetella bronchiseptica (strain ATCC BAA-588 / NCTC 13252 / RB50) (Alcaligenes bronchisepticus).